The sequence spans 689 residues: Glycine--tRNA ligase beta subunit (689 aa).

Belongs to the class-II aminoacyl-tRNA synthetase family. Tetramer of two alpha and two beta subunits.

Its subcellular location is the cytoplasm. The enzyme catalyses tRNA(Gly) + glycine + ATP = glycyl-tRNA(Gly) + AMP + diphosphate. The chain is Glycine--tRNA ligase beta subunit from Escherichia coli O17:K52:H18 (strain UMN026 / ExPEC).